Reading from the N-terminus, the 170-residue chain is Bifunctional protein PyrR (170 aa).

The short motif at 90–102 is the PRPP-binding element; the sequence is LVLIDDVLMSGRT.

The protein belongs to the purine/pyrimidine phosphoribosyltransferase family. PyrR subfamily.

The catalysed reaction is UMP + diphosphate = 5-phospho-alpha-D-ribose 1-diphosphate + uracil. Its function is as follows. Regulates the transcription of the pyrimidine nucleotide (pyr) operon in response to exogenous pyrimidines. Functionally, also displays a weak uracil phosphoribosyltransferase activity which is not physiologically significant. In Pseudomonas syringae pv. tomato (strain ATCC BAA-871 / DC3000), this protein is Bifunctional protein PyrR.